The following is a 151-amino-acid chain: Ribosome maturation factor RimP (151 aa).

It belongs to the RimP family.

It is found in the cytoplasm. In terms of biological role, required for maturation of 30S ribosomal subunits. In Synechocystis sp. (strain ATCC 27184 / PCC 6803 / Kazusa), this protein is Ribosome maturation factor RimP.